A 231-amino-acid polypeptide reads, in one-letter code: PX domain-containing protein 1 (231 aa).

The region spanning M1 to Q134 is the PX domain.

The chain is PX domain-containing protein 1 (PXDC1) from Bos taurus (Bovine).